The following is a 169-amino-acid chain: MGLFDKLKSLVSDDKKDTGTIEIVAPLSGEIVNIEDVPDVVFAEKIVGDGIAIKPTGNKMVAPVDGTIGKIFETNHAFSIESDSGIELFVHFGIDTVELKGEGFKRIAEEGQRVKVGDPVIEFDLPLLEEKAKSTLTPVVISNMDEIKELIKLSGSVTVGETPVIRIKK.

The PTS EIIA type-1 domain maps to 39 to 143; sequence DVVFAEKIVG…STLTPVVISN (105 aa). Zn(2+) contacts are provided by H76 and H91. H91 (tele-phosphohistidine intermediate; for EIIA activity) is an active-site residue. The residue at position 91 (H91) is a Phosphohistidine; by HPr.

In terms of assembly, heterodimer with glycerol kinase (glpk). Requires Zn(2+) as cofactor.

It is found in the cytoplasm. Functionally, the phosphoenolpyruvate-dependent sugar phosphotransferase system (sugar PTS), a major carbohydrate active transport system, catalyzes the phosphorylation of incoming sugar substrates concomitantly with their translocation across the cell membrane. The enzyme II complex composed of PtsG and Crr is involved in glucose transport. The chain is PTS system glucose-specific EIIA component (crr) from Salmonella typhi.